The following is a 1278-amino-acid chain: Sterol regulatory element-binding protein cleavage-activating protein (1278 aa).

Residues M1–H18 are Cytoplasmic-facing. The helical transmembrane segment at G19–A39 threads the bilayer. Over C40–E279 the chain is Lumenal. The tract at residues K46 to E284 is loop-1. Residues P60–E80 are disordered. A glycan (N-linked (GlcNAc...) asparagine) is linked at N263. The helical transmembrane segment at I280–Y300 threads the bilayer. Residues E284–I442 form the SSD domain. Topologically, residues F301–K312 are cytoplasmic. A helical membrane pass occupies residues W313–L333. At C334 to N344 the chain is on the lumenal side. A helical transmembrane segment spans residues G345–T365. At K366–G401 the chain is on the cytoplasmic side. A helical membrane pass occupies residues I402–V422. V423 is a topological domain (lumenal). Residues G424–I444 form a helical membrane-spanning segment. Over R445–R518 the chain is Cytoplasmic. Residues M447 to L452 carry the ER export signal motif. Glycyl lysine isopeptide (Lys-Gly) (interchain with G-Cter in ubiquitin) cross-links involve residues K454 and K466. Residues L519–L539 traverse the membrane as a helical segment. The loop-7 stretch occupies residues D535 to K710. Topologically, residues R540 to T707 are lumenal. A disordered region spans residues P581–G618. N-linked (GlcNAc...) asparagine glycosylation is found at N590 and N641. Positions E668–G696 are disordered. Residues L708 to C728 form a helical membrane-spanning segment. At L729 to D1278 the chain is on the cytoplasmic side. The segment at R731 to D1278 is interaction with SREBF2. One copy of the WD 1 repeat lies at V771–R811. A phosphoserine mark is found at S821, S837, S850, S905, and S935. The interval E834–D904 is disordered. WD repeat units follow at residues P951–S1001 and E1004–P1041. R1050 is modified (omega-N-methylarginine). WD repeat units lie at residues A1076 to T1113, G1116 to H1154, A1157 to S1194, and Q1196 to T1234.

Belongs to the WD repeat SCAP family. As to quaternary structure, membrane region forms a homotetramer. Component of the SCAP-SREBP complex (composed of SCAP and SREBF1/SREBP1 or SREBF2/SREBP2); interacts with SREBF1/SREBP1 or SREBF2/SREBP2 through its C-terminal cytoplasmic domain. Forms a ternary complex with INSIG1 or INSIG2 through its transmembrane domains at high sterol concentrations. Interacts with PAQR3; the interaction anchors the SCAP-SREBP complex to the Golgi apparatus in low cholesterol conditions. Interacts with the SEC23-SEC24 complex in a SAR1-GTP-dependent manner through an ER export signal in its third cytoplasmic loop. Interacts with RNF139; the interaction inhibits the interaction of SCAP with SEC24B and hampering the ER to Golgi transport of the SCAP-SREBP complex. Interacts with SPRING1. Ubiquitinated at Lys-454 and Lys-466. RNF145 triggers ubiquitination of SCAP, likely inhibiting SCAP-SREBP complex transport to the Golgi apparatus and the subsequent processing/maturation of SREBF2/SREBP2.

Its subcellular location is the endoplasmic reticulum membrane. The protein resides in the golgi apparatus membrane. The protein localises to the cytoplasmic vesicle. It is found in the COPII-coated vesicle membrane. Escort protein required for cholesterol as well as lipid homeostasis. Regulates export of the SCAP-SREBP complex from the endoplasmic reticulum to the Golgi upon low cholesterol, thereby regulating the processing of sterol regulatory element-binding proteins (SREBPs) SREBF1/SREBP1 and SREBF2/SREBP2. At high sterol concentrations, formation of a ternary complex with INSIG (INSIG1 or INSIG2) leads to mask the ER export signal in SCAP, promoting retention of the complex in the endoplasmic reticulum. Low sterol concentrations trigger release of INSIG, a conformational change in the SSD domain of SCAP, unmasking of the ER export signal, promoting recruitment into COPII-coated vesicles and transport of the SCAP-SREBP to the Golgi: in the Golgi, SREBPs are then processed, releasing the transcription factor fragment of SREBPs from the membrane, its import into the nucleus and up-regulation of LDLR, INSIG1 and the mevalonate pathway. Binds cholesterol via its SSD domain. This is Sterol regulatory element-binding protein cleavage-activating protein from Bos taurus (Bovine).